The primary structure comprises 334 residues: Nucleoid-associated protein YpsIP31758_2721 (334 aa).

This sequence belongs to the YejK family.

Its subcellular location is the cytoplasm. The protein resides in the nucleoid. The sequence is that of Nucleoid-associated protein YpsIP31758_2721 from Yersinia pseudotuberculosis serotype O:1b (strain IP 31758).